The chain runs to 210 residues: Methylthioribulose-1-phosphate dehydratase (210 aa).

Residues H97 and H99 each contribute to the Zn(2+) site.

Belongs to the aldolase class II family. MtnB subfamily. Homotetramer. Zn(2+) serves as cofactor.

The catalysed reaction is 5-(methylsulfanyl)-D-ribulose 1-phosphate = 5-methylsulfanyl-2,3-dioxopentyl phosphate + H2O. The protein operates within amino-acid biosynthesis; L-methionine biosynthesis via salvage pathway; L-methionine from S-methyl-5-thio-alpha-D-ribose 1-phosphate: step 2/6. Catalyzes the dehydration of methylthioribulose-1-phosphate (MTRu-1-P) into 2,3-diketo-5-methylthiopentyl-1-phosphate (DK-MTP-1-P). This is Methylthioribulose-1-phosphate dehydratase from Geobacillus kaustophilus (strain HTA426).